The primary structure comprises 293 residues: ATP synthase gamma chain (293 aa).

This sequence belongs to the ATPase gamma chain family. F-type ATPases have 2 components, CF(1) - the catalytic core - and CF(0) - the membrane proton channel. CF(1) has five subunits: alpha(3), beta(3), gamma(1), delta(1), epsilon(1). CF(0) has three main subunits: a, b and c.

It is found in the cell inner membrane. Produces ATP from ADP in the presence of a proton gradient across the membrane. The gamma chain is believed to be important in regulating ATPase activity and the flow of protons through the CF(0) complex. This chain is ATP synthase gamma chain, found in Psychrobacter arcticus (strain DSM 17307 / VKM B-2377 / 273-4).